The following is a 300-amino-acid chain: Non-secreted LysM effector LysM16 (300 aa).

The 47-residue stretch at 176–222 folds into the LysM domain; the sequence is EWHTVFSGDTCQLIEAEYGITLEKFIALNTYVNSTCGNIWPDYAYCV.

The protein belongs to the secreted LysM effector family.

Non-secreted LysM effector that might be involved in manipulation of host defenses for successful infection. In Penicillium expansum (Blue mold rot fungus), this protein is Non-secreted LysM effector LysM16.